We begin with the raw amino-acid sequence, 352 residues long: Photosystem II protein D1 (352 aa).

T2 carries the post-translational modification N-acetylthreonine. T2 carries the phosphothreonine modification. The next 3 membrane-spanning stretches (helical) occupy residues 29-46 (YIGW…TATS), 118-133 (HFFL…EWEL), and 142-156 (WIAV…AATA). Residue H118 coordinates chlorophyll a. A pheophytin a-binding site is contributed by Y126. [CaMn4O5] cluster contacts are provided by D170 and E189. A helical transmembrane segment spans residues 197-218 (FHMLGVAGVFGGSLFSAMHGSL). Position 198 (H198) interacts with chlorophyll a. A quinone-binding positions include H215 and 264–265 (SF). H215 provides a ligand contact to Fe cation. Position 272 (H272) interacts with Fe cation. A helical membrane pass occupies residues 274–288 (FLAAWPVVGIWFTAL). Residues H332, E333, D342, and A344 each contribute to the [CaMn4O5] cluster site. The propeptide occupies 345-352 (SVEAPSIA).

The protein belongs to the reaction center PufL/M/PsbA/D family. In terms of assembly, PSII is composed of 1 copy each of membrane proteins PsbA, PsbB, PsbC, PsbD, PsbE, PsbF, PsbH, PsbI, PsbJ, PsbK, PsbL, PsbM, PsbT, PsbX, PsbY, PsbZ, Psb30/Ycf12, at least 3 peripheral proteins of the oxygen-evolving complex and a large number of cofactors. It forms dimeric complexes. The D1/D2 heterodimer binds P680, chlorophylls that are the primary electron donor of PSII, and subsequent electron acceptors. It shares a non-heme iron and each subunit binds pheophytin, quinone, additional chlorophylls, carotenoids and lipids. D1 provides most of the ligands for the Mn4-Ca-O5 cluster of the oxygen-evolving complex (OEC). There is also a Cl(-1) ion associated with D1 and D2, which is required for oxygen evolution. The PSII complex binds additional chlorophylls, carotenoids and specific lipids. serves as cofactor. Post-translationally, tyr-161 forms a radical intermediate that is referred to as redox-active TyrZ, YZ or Y-Z. C-terminally processed by CTPA; processing is essential to allow assembly of the oxygen-evolving complex and thus photosynthetic growth.

It localises to the plastid. Its subcellular location is the chloroplast thylakoid membrane. The enzyme catalyses 2 a plastoquinone + 4 hnu + 2 H2O = 2 a plastoquinol + O2. Photosystem II (PSII) is a light-driven water:plastoquinone oxidoreductase that uses light energy to abstract electrons from H(2)O, generating O(2) and a proton gradient subsequently used for ATP formation. It consists of a core antenna complex that captures photons, and an electron transfer chain that converts photonic excitation into a charge separation. The D1/D2 (PsbA/PsbD) reaction center heterodimer binds P680, the primary electron donor of PSII as well as several subsequent electron acceptors. In Chlorella ellipsoidea, this protein is Photosystem II protein D1.